Consider the following 330-residue polypeptide: DCD domain-containing protein NRP-B (330 aa).

Residues 137–181 (HPSKSSKKNNNLNKKHGDNNNNDNNKDSKAAGDKRFKTLPPSESL) are disordered. Positions 160–172 (NNKDSKAAGDKRF) are enriched in basic and acidic residues. Residues 185–317 (ETIGGYIFVC…ALSLLDIFAE (133 aa)) enclose the DCD domain.

It localises to the cytoplasm. Functionally, involved in stress signaling pathway that mediates cell death in response to endoplasmic reticulum (ER) stress and osmotic stress. The sequence is that of DCD domain-containing protein NRP-B from Glycine max (Soybean).